We begin with the raw amino-acid sequence, 232 residues long: Large ribosomal subunit protein uL1 (232 aa).

It belongs to the universal ribosomal protein uL1 family. Part of the 50S ribosomal subunit.

Its function is as follows. Binds directly to 23S rRNA. The L1 stalk is quite mobile in the ribosome, and is involved in E site tRNA release. In terms of biological role, protein L1 is also a translational repressor protein, it controls the translation of the L11 operon by binding to its mRNA. The polypeptide is Large ribosomal subunit protein uL1 (Burkholderia mallei (strain NCTC 10247)).